The primary structure comprises 409 residues: MLRRAQCLLRLHGNGGHSLVSRFRNYATDEGNPKQNPNPNPRAQKPGTKNLPALRNPFAAAQDRTKNSYLTMVEIFQERDVHRRNHVEFIYAALKNMADFGVERDLEVYKALINVMPKGKFIPTNMFQAEFMHYPKQQQCIIDLLEQMEDCGVMPDHEMEAMLLNVFGRQGHPLRKYWRMMYWMPKFKNLSPWPLPDPVPDDTLEMAKLALERMCTVDLRSKITVFETSELKDAIDDTWIVSGMSPEQEKLLREHSRQKALYIEGPFHIWLRNRRINYFTLRADADSEFLSELDERQLDEDDVSHIEVPFFGRAPPRRHNQLGKLRSVHQQDDGTIMAICATGTSTKDSLLSWIRLLEANGNPSIGEVPVLFRFTSEVPAKAEEIEGGASVPATSDNSSQDEHISSRQK.

A mitochondrion-targeting transit peptide spans 1–26 (MLRRAQCLLRLHGNGGHSLVSRFRNY). 2 disordered regions span residues 27 to 53 (ATDE…NLPA) and 383 to 409 (EEIE…SRQK). The segment covering 400–409 (QDEHISSRQK) has biased composition (basic and acidic residues).

This sequence belongs to the ECSIT family. As to quaternary structure, interacts with Traf6. Associates with mitochondrial complex I assembly intermediates during its biogenesis.

It localises to the cytoplasm. The protein resides in the nucleus. Its subcellular location is the mitochondrion. As part of the MCIA complex, involved in the assembly of the mitochondrial complex I. Involved in the innate immune response; promotes the production of antibacterial peptides. The protein is Evolutionarily conserved signaling intermediate in Toll pathway, mitochondrial of Drosophila melanogaster (Fruit fly).